Consider the following 210-residue polypeptide: Imidazole glycerol phosphate synthase subunit HisH (210 aa).

The Glutamine amidotransferase type-1 domain occupies 7–210; sequence KVVIIDTGCA…SQLIKNFLEM (204 aa). Cys82 functions as the Nucleophile in the catalytic mechanism. Catalysis depends on residues His192 and Glu194.

As to quaternary structure, heterodimer of HisH and HisF.

The protein resides in the cytoplasm. It carries out the reaction 5-[(5-phospho-1-deoxy-D-ribulos-1-ylimino)methylamino]-1-(5-phospho-beta-D-ribosyl)imidazole-4-carboxamide + L-glutamine = D-erythro-1-(imidazol-4-yl)glycerol 3-phosphate + 5-amino-1-(5-phospho-beta-D-ribosyl)imidazole-4-carboxamide + L-glutamate + H(+). The enzyme catalyses L-glutamine + H2O = L-glutamate + NH4(+). The protein operates within amino-acid biosynthesis; L-histidine biosynthesis; L-histidine from 5-phospho-alpha-D-ribose 1-diphosphate: step 5/9. Functionally, IGPS catalyzes the conversion of PRFAR and glutamine to IGP, AICAR and glutamate. The HisH subunit catalyzes the hydrolysis of glutamine to glutamate and ammonia as part of the synthesis of IGP and AICAR. The resulting ammonia molecule is channeled to the active site of HisF. This is Imidazole glycerol phosphate synthase subunit HisH from Photobacterium profundum (strain SS9).